Consider the following 195-residue polypeptide: Small ribosomal subunit protein uS4c (195 aa).

The 62-residue stretch at methionine 82–asparagine 143 folds into the S4 RNA-binding domain.

This sequence belongs to the universal ribosomal protein uS4 family. Part of the 30S ribosomal subunit. Contacts protein S5. The interaction surface between S4 and S5 is involved in control of translational fidelity.

It localises to the plastid. The protein localises to the chloroplast. One of the primary rRNA binding proteins, it binds directly to 16S rRNA where it nucleates assembly of the body of the 30S subunit. Its function is as follows. With S5 and S12 plays an important role in translational accuracy. In Watsonia angusta, this protein is Small ribosomal subunit protein uS4c (rps4).